A 129-amino-acid polypeptide reads, in one-letter code: Large ribosomal subunit protein bL17 (129 aa).

Belongs to the bacterial ribosomal protein bL17 family. In terms of assembly, part of the 50S ribosomal subunit. Contacts protein L32.

This chain is Large ribosomal subunit protein bL17, found in Actinobacillus succinogenes (strain ATCC 55618 / DSM 22257 / CCUG 43843 / 130Z).